Reading from the N-terminus, the 188-residue chain is Ribosome maturation factor RimP (188 aa).

The protein belongs to the RimP family.

The protein resides in the cytoplasm. Functionally, required for maturation of 30S ribosomal subunits. This Corynebacterium aurimucosum (strain ATCC 700975 / DSM 44827 / CIP 107346 / CN-1) (Corynebacterium nigricans) protein is Ribosome maturation factor RimP.